The sequence spans 37 residues: MAGEIFGTAFLFIVLVPVGLALGAFLLKVQGVQKAEK.

The chain crosses the membrane as a helical span at residues 5–25; that stretch reads IFGTAFLFIVLVPVGLALGAF.

This sequence belongs to the PetM family. In terms of assembly, the 4 large subunits of the cytochrome b6-f complex are cytochrome b6, subunit IV (17 kDa polypeptide, PetD), cytochrome f and the Rieske protein, while the 4 small subunits are PetG, PetL, PetM and PetN. The complex functions as a dimer.

It is found in the cellular thylakoid membrane. In terms of biological role, component of the cytochrome b6-f complex, which mediates electron transfer between photosystem II (PSII) and photosystem I (PSI), cyclic electron flow around PSI, and state transitions. This Synechococcus elongatus (strain ATCC 33912 / PCC 7942 / FACHB-805) (Anacystis nidulans R2) protein is Cytochrome b6-f complex subunit 7.